A 335-amino-acid polypeptide reads, in one-letter code: UPF0324 membrane protein LMOf2365_2179 (335 aa).

A run of 8 helical transmembrane segments spans residues 10-28, 33-55, 91-113, 123-142, 155-177, 251-270, 277-299, and 309-331; these read TFWY…SYFL, FLMI…ALFP, AGWR…VYFL, LAIL…VVAI, VAAT…IYPI, VPWF…FGII, FLVI…NVHL, and PFAA…VLLF.

It belongs to the UPF0324 family.

The protein resides in the cell membrane. The protein is UPF0324 membrane protein LMOf2365_2179 of Listeria monocytogenes serotype 4b (strain F2365).